A 705-amino-acid polypeptide reads, in one-letter code: Prolyl endopeptidase (705 aa).

The signal sequence occupies residues 1–20; the sequence is MKYKKLSVAVAAFAFAAVSA. Residues Ser556 and His675 each act as charge relay system in the active site.

This sequence belongs to the peptidase S9A family. Monomer.

It localises to the periplasm. The enzyme catalyses Hydrolysis of Pro-|-Xaa &gt;&gt; Ala-|-Xaa in oligopeptides.. Its function is as follows. Cleaves peptide bonds on the C-terminal side of prolyl residues within peptides that are up to approximately 30 amino acids long. Has an absolute requirement for an X-Pro bond in the trans configuration immediately preceding the Pro-Y scissible bond. The polypeptide is Prolyl endopeptidase (Elizabethkingia miricola (Chryseobacterium miricola)).